We begin with the raw amino-acid sequence, 148 residues long: 18 kDa antigen (148 aa).

One can recognise a sHSP domain in the interval 21-131 (TSARPAVMPM…KPRKISVDRG (111 aa)).

It belongs to the small heat shock protein (HSP20) family.

In terms of biological role, not known. This protein is one of the major immune reactive proteins in mycobacteria. This Mycobacterium leprae (strain TN) protein is 18 kDa antigen (hsp18).